The primary structure comprises 534 residues: Serine/threonine-protein kinase Nek6 (534 aa).

Residues 4 to 257 (YEVVEQIGRG…AGELLRHPYL (254 aa)) enclose the Protein kinase domain. ATP contacts are provided by residues 10–18 (IGRGAYGSA) and lysine 33. Aspartate 129 functions as the Proton acceptor in the catalytic mechanism. Disordered regions lie at residues 278 to 306 (KSNL…SSEA) and 425 to 449 (KAHT…SSPK).

The protein belongs to the protein kinase superfamily. NEK Ser/Thr protein kinase family. NIMA subfamily. As to quaternary structure, interacts with DIS1. Post-translationally, ubiquitinated by the E3 ligase DIS1. Ubiquitination of NEK6 leads to its degradation via the 26S proteasome-dependent pathway. As to expression, expressed in anthers, pistils and leaves.

The protein localises to the cytoplasm. It catalyses the reaction L-seryl-[protein] + ATP = O-phospho-L-seryl-[protein] + ADP + H(+). The catalysed reaction is L-threonyl-[protein] + ATP = O-phospho-L-threonyl-[protein] + ADP + H(+). Functionally, may be involved in plant development processes. In Oryza sativa subsp. japonica (Rice), this protein is Serine/threonine-protein kinase Nek6.